The chain runs to 248 residues: 3-deoxy-manno-octulosonate cytidylyltransferase (248 aa).

It belongs to the KdsB family.

The protein localises to the cytoplasm. The enzyme catalyses 3-deoxy-alpha-D-manno-oct-2-ulosonate + CTP = CMP-3-deoxy-beta-D-manno-octulosonate + diphosphate. It functions in the pathway nucleotide-sugar biosynthesis; CMP-3-deoxy-D-manno-octulosonate biosynthesis; CMP-3-deoxy-D-manno-octulosonate from 3-deoxy-D-manno-octulosonate and CTP: step 1/1. It participates in bacterial outer membrane biogenesis; lipopolysaccharide biosynthesis. Its function is as follows. Activates KDO (a required 8-carbon sugar) for incorporation into bacterial lipopolysaccharide in Gram-negative bacteria. The sequence is that of 3-deoxy-manno-octulosonate cytidylyltransferase from Photobacterium profundum (strain SS9).